The chain runs to 31 residues: Chymotrypsin (31 aa).

The 31-residue stretch at 1 to 31 folds into the Peptidase S1 domain; sequence IVGGVEAVPGVWPYQAALFIIDMYFCGGSLI.

It belongs to the peptidase S1 family.

Its subcellular location is the secreted. It localises to the extracellular space. The catalysed reaction is Preferential cleavage: Tyr-|-Xaa, Trp-|-Xaa, Phe-|-Xaa, Leu-|-Xaa.. The chain is Chymotrypsin from Penaeus monodon (Giant tiger prawn).